A 377-amino-acid chain; its full sequence is Protein RecA (377 aa).

ATP is bound at residue 76-83 (GPESSGKT).

This sequence belongs to the RecA family.

The protein resides in the cytoplasm. In terms of biological role, can catalyze the hydrolysis of ATP in the presence of single-stranded DNA, the ATP-dependent uptake of single-stranded DNA by duplex DNA, and the ATP-dependent hybridization of homologous single-stranded DNAs. It interacts with LexA causing its activation and leading to its autocatalytic cleavage. The sequence is that of Protein RecA from Corynebacterium aurimucosum (strain ATCC 700975 / DSM 44827 / CIP 107346 / CN-1) (Corynebacterium nigricans).